A 346-amino-acid polypeptide reads, in one-letter code: Cyclin-dependent kinase 2 (346 aa).

Residue Met-1 is modified to N-acetylmethionine. Residues 4–334 (FQKVEKIGEG…AKAALAHPFF (331 aa)) enclose the Protein kinase domain. Lys-6 is subject to N6-acetyllysine. 10-18 (IGEGTYGVV) lines the ATP pocket. Thr-14 is subject to Phosphothreonine. Tyr-15 is subject to Phosphotyrosine; by WEE1. Tyr-19 is subject to Phosphotyrosine. ATP is bound by residues Lys-33, 81 to 83 (EFL), and Asp-86. Asp-127 acts as the Proton acceptor in catalysis. Residues 129–132 (KPQN) and Asp-145 each bind ATP. Residues Asn-132 and Asp-145 each contribute to the Mg(2+) site. A Phosphothreonine; by CAK and CCRK modification is found at Thr-160. A Phosphoserine modification is found at Ser-218.

Belongs to the protein kinase superfamily. CMGC Ser/Thr protein kinase family. CDC2/CDKX subfamily. In terms of assembly, found in a complex with CABLES1, CCNA1 and CCNE1. Interacts with CABLES1. Interacts with UHRF2. Part of a complex consisting of UHRF2, CDK2 and CCNE1. Interacts with the Speedy/Ringo proteins SPDYA and SPDYC. Interaction with SPDYA promotes kinase activation via a conformation change that alleviates obstruction of the substrate-binding cleft by the T-loop. Found in a complex with both SPDYA and CDKN1B/KIP1. Binds to RB1 and CDK7. Binding to CDKN1A (p21) leads to CDK2/cyclin E inactivation at the G1-S phase DNA damage checkpoint, thereby arresting cells at the G1-S transition during DNA repair. Associated with PTPN6 and beta-catenin/CTNNB1. Interacts with CACUL1. May interact with CEP63. Interacts with ANKRD17. Interacts with CEBPA (when phosphorylated). Forms a ternary complex with CCNA2 and CDKN1B; CDKN1B inhibits the kinase activity of CDK2 through conformational rearrangements. Interacts with cyclins A, B1, B3, D, or E. Interacts with CDK2AP2. It depends on Mg(2+) as a cofactor. In terms of processing, phosphorylated at Thr-160 by CDK7 in a CAK complex. Phosphorylation at Thr-160 promotes kinase activity, whereas phosphorylation at Tyr-15 by WEE1 reduces slightly kinase activity. Phosphorylated on Thr-14 and Tyr-15 during S and G2 phases before being dephosphorylated by CDC25A. Post-translationally, nitrosylated after treatment with nitric oxide (DETA-NO).

The protein resides in the cytoplasm. It is found in the cytoskeleton. It localises to the microtubule organizing center. Its subcellular location is the centrosome. The protein localises to the nucleus. The protein resides in the cajal body. It is found in the endosome. It carries out the reaction L-seryl-[protein] + ATP = O-phospho-L-seryl-[protein] + ADP + H(+). The catalysed reaction is L-threonyl-[protein] + ATP = O-phospho-L-threonyl-[protein] + ADP + H(+). With respect to regulation, phosphorylation at Thr-14 or Tyr-15 inactivates the enzyme, while phosphorylation at Thr-160 activates it. Stimulated by MYC. Inactivated by CDKN1A (p21). Its function is as follows. Serine/threonine-protein kinase involved in the control of the cell cycle; essential for meiosis, but dispensable for mitosis. Phosphorylates CABLES1, CTNNB1, CDK2AP2, ERCC6, NBN, USP37, p53/TP53, NPM1, CDK7, RB1, BRCA2, MYC, NPAT, EZH2. Triggers duplication of centrosomes and DNA. Acts at the G1-S transition to promote the E2F transcriptional program and the initiation of DNA synthesis, and modulates G2 progression; controls the timing of entry into mitosis/meiosis by controlling the subsequent activation of cyclin B/CDK1 by phosphorylation, and coordinates the activation of cyclin B/CDK1 at the centrosome and in the nucleus. Crucial role in orchestrating a fine balance between cellular proliferation, cell death, and DNA repair in embryonic stem cells (ESCs). Activity of CDK2 is maximal during S phase and G2; activated by interaction with cyclin E during the early stages of DNA synthesis to permit G1-S transition, and subsequently activated by cyclin A2 (cyclin A1 in germ cells) during the late stages of DNA replication to drive the transition from S phase to mitosis, the G2 phase. EZH2 phosphorylation promotes H3K27me3 maintenance and epigenetic gene silencing. Cyclin E/CDK2 prevents oxidative stress-mediated Ras-induced senescence by phosphorylating MYC. Involved in G1-S phase DNA damage checkpoint that prevents cells with damaged DNA from initiating mitosis; regulates homologous recombination-dependent repair by phosphorylating BRCA2, this phosphorylation is low in S phase when recombination is active, but increases as cells progress towards mitosis. In response to DNA damage, double-strand break repair by homologous recombination a reduction of CDK2-mediated BRCA2 phosphorylation. Involved in regulation of telomere repair by mediating phosphorylation of NBN. Phosphorylation of RB1 disturbs its interaction with E2F1. NPM1 phosphorylation by cyclin E/CDK2 promotes its dissociation from unduplicated centrosomes, thus initiating centrosome duplication. Cyclin E/CDK2-mediated phosphorylation of NPAT at G1-S transition and until prophase stimulates the NPAT-mediated activation of histone gene transcription during S phase. Required for vitamin D-mediated growth inhibition by being itself inactivated. Involved in the nitric oxide- (NO) mediated signaling in a nitrosylation/activation-dependent manner. USP37 is activated by phosphorylation and thus triggers G1-S transition. CTNNB1 phosphorylation regulates insulin internalization. Phosphorylates FOXP3 and negatively regulates its transcriptional activity and protein stability. Phosphorylates ERCC6 which is essential for its chromatin remodeling activity at DNA double-strand breaks. Acts as a regulator of the phosphatidylinositol 3-kinase/protein kinase B signal transduction by mediating phosphorylation of the C-terminus of protein kinase B (PKB/AKT1 and PKB/AKT2), promoting its activation. In Mus musculus (Mouse), this protein is Cyclin-dependent kinase 2 (Cdk2).